We begin with the raw amino-acid sequence, 342 residues long: tRNA N6-adenosine threonylcarbamoyltransferase (342 aa).

Fe cation is bound by residues histidine 111 and histidine 115. Substrate is bound by residues 133-137, aspartate 166, glycine 179, aspartate 183, and asparagine 273; that span reads AVSGG. Aspartate 301 serves as a coordination point for Fe cation.

It belongs to the KAE1 / TsaD family. Fe(2+) serves as cofactor.

It is found in the cytoplasm. The catalysed reaction is L-threonylcarbamoyladenylate + adenosine(37) in tRNA = N(6)-L-threonylcarbamoyladenosine(37) in tRNA + AMP + H(+). Its function is as follows. Required for the formation of a threonylcarbamoyl group on adenosine at position 37 (t(6)A37) in tRNAs that read codons beginning with adenine. Is involved in the transfer of the threonylcarbamoyl moiety of threonylcarbamoyl-AMP (TC-AMP) to the N6 group of A37, together with TsaE and TsaB. TsaD likely plays a direct catalytic role in this reaction. This chain is tRNA N6-adenosine threonylcarbamoyltransferase, found in Syntrophotalea carbinolica (strain DSM 2380 / NBRC 103641 / GraBd1) (Pelobacter carbinolicus).